The primary structure comprises 387 residues: Dual-specificity RNA methyltransferase RlmN (387 aa).

Glu110 (proton acceptor) is an active-site residue. In terms of domain architecture, Radical SAM core spans Val117 to Arg349. A disulfide bridge links Cys124 with Cys360. [4Fe-4S] cluster is bound by residues Cys131, Cys135, and Cys138. S-adenosyl-L-methionine contacts are provided by residues Gly186–Glu187, Ser218, Ser240–His242, and Asn317. Cys360 (S-methylcysteine intermediate) is an active-site residue.

This sequence belongs to the radical SAM superfamily. RlmN family. The cofactor is [4Fe-4S] cluster.

The protein localises to the cytoplasm. It catalyses the reaction adenosine(2503) in 23S rRNA + 2 reduced [2Fe-2S]-[ferredoxin] + 2 S-adenosyl-L-methionine = 2-methyladenosine(2503) in 23S rRNA + 5'-deoxyadenosine + L-methionine + 2 oxidized [2Fe-2S]-[ferredoxin] + S-adenosyl-L-homocysteine. The enzyme catalyses adenosine(37) in tRNA + 2 reduced [2Fe-2S]-[ferredoxin] + 2 S-adenosyl-L-methionine = 2-methyladenosine(37) in tRNA + 5'-deoxyadenosine + L-methionine + 2 oxidized [2Fe-2S]-[ferredoxin] + S-adenosyl-L-homocysteine. In terms of biological role, specifically methylates position 2 of adenine 2503 in 23S rRNA and position 2 of adenine 37 in tRNAs. m2A2503 modification seems to play a crucial role in the proofreading step occurring at the peptidyl transferase center and thus would serve to optimize ribosomal fidelity. The polypeptide is Dual-specificity RNA methyltransferase RlmN (Hyphomonas neptunium (strain ATCC 15444)).